The sequence spans 355 residues: Fructose-1,6-bisphosphatase class 1 (355 aa).

Mg(2+)-binding residues include Glu90, Asp109, Leu111, and Asp112. Residues 112-115 (DGSS), Asn204, and 256-258 (YLY) contribute to the substrate site. Residue Glu276 coordinates Mg(2+).

The protein belongs to the FBPase class 1 family. Homotetramer. The cofactor is Mg(2+).

The protein localises to the cytoplasm. The enzyme catalyses beta-D-fructose 1,6-bisphosphate + H2O = beta-D-fructose 6-phosphate + phosphate. It functions in the pathway carbohydrate biosynthesis; gluconeogenesis. In Acidiphilium cryptum (strain JF-5), this protein is Fructose-1,6-bisphosphatase class 1.